We begin with the raw amino-acid sequence, 155 residues long: Probable jacalin-related lectin 26 (155 aa).

2 helical membrane-spanning segments follow: residues 26 to 48 (AYLY…IAMI) and 127 to 149 (VSFV…VLFL). Positions 47–155 (MIRAGSVGKK…VLFLMKFKRS (109 aa)) constitute a Jacalin-type lectin domain.

It belongs to the jacalin lectin family.

The protein resides in the membrane. This Arabidopsis thaliana (Mouse-ear cress) protein is Probable jacalin-related lectin 26 (JAL26).